The chain runs to 217 residues: Adenylate kinase (217 aa).

10–15 (GAGKGT) serves as a coordination point for ATP. The tract at residues 30-59 (STGDMFRAAMKEETPLGLEAKSYIDKGELV) is NMP. AMP is bound by residues Thr-31, Arg-36, 57-59 (ELV), 85-88 (GFPR), and Gln-92. An LID region spans residues 126-163 (GRRICSVCGTTYHLVFNPPKTPGICDKDGGELYQRADD). Arg-127 is a binding site for ATP. Zn(2+) contacts are provided by Cys-130 and Cys-133. 136–137 (TY) provides a ligand contact to ATP. Zn(2+) contacts are provided by Cys-150 and Asp-153. 2 residues coordinate AMP: Arg-160 and Arg-171. Position 199 (Gln-199) interacts with ATP.

This sequence belongs to the adenylate kinase family. As to quaternary structure, monomer.

The protein resides in the cytoplasm. It catalyses the reaction AMP + ATP = 2 ADP. It functions in the pathway purine metabolism; AMP biosynthesis via salvage pathway; AMP from ADP: step 1/1. In terms of biological role, catalyzes the reversible transfer of the terminal phosphate group between ATP and AMP. Plays an important role in cellular energy homeostasis and in adenine nucleotide metabolism. This is Adenylate kinase from Bacillus subtilis (strain 168).